Here is a 156-residue protein sequence, read N- to C-terminus: Small ribosomal subunit protein uS7 (156 aa).

The protein belongs to the universal ribosomal protein uS7 family. Part of the 30S ribosomal subunit. Contacts proteins S9 and S11.

Its function is as follows. One of the primary rRNA binding proteins, it binds directly to 16S rRNA where it nucleates assembly of the head domain of the 30S subunit. Is located at the subunit interface close to the decoding center, probably blocks exit of the E-site tRNA. The sequence is that of Small ribosomal subunit protein uS7 from Rhodococcus opacus (strain B4).